The following is a 150-amino-acid chain: UPF0756 membrane protein YPN_1328 (150 aa).

The next 4 helical transmembrane spans lie at 16-36, 51-71, 88-108, and 114-134; these read ALGI…LIAI, YGLT…IASG, ILAI…VSLM, and VVAG…GVPV.

This sequence belongs to the UPF0756 family.

The protein localises to the cell membrane. This chain is UPF0756 membrane protein YPN_1328, found in Yersinia pestis bv. Antiqua (strain Nepal516).